A 368-amino-acid polypeptide reads, in one-letter code: MSVAGLKKQFYKASQLVSEKVGGAEGTKLDDDFKEMEKKVDVTSKAVTEVLARTIEYLQPNPASRAKLTMLNTVSKIRGQVKNPGYPQSEGLLGECMIRHGKELGGESNFGDALLDAGESMKRLAEVKDSLDIEVKQNFIDPLQNLCDKDLKEIQHHLKKLEGRRLDFDYKKKRQGKIPDEELRQAMEKFEESKEVAETSMHHLLETDIEQVSQLSALVDAQLDYHRQAVQILDELADKLKRRMREASSRPKREYKPKPRELLDLGEPEQSNGGFPCAAAPKITASSSFRSSDKPVRTPSRSMPPLDQPSCKALYDFEPENDGELGFHEGDIITLTNQIDENWYEGMLDGQSGFFPLSYVEVLVPLPQ.

The segment at 1 to 21 is membrane-binding amphipathic helix; sequence MSVAGLKKQFYKASQLVSEKV. Residues 18-249 enclose the BAR domain; that stretch reads SEKVGGAEGT…LKRRMREASS (232 aa). Positions 60–87 are required for dimerization upon membrane association; sequence PNPASRAKLTMLNTVSKIRGQVKNPGYP. Residues 181 to 250 adopt a coiled-coil conformation; sequence EELRQAMEKF…KRRMREASSR (70 aa). Residues 218–254 form an interaction with ARC region; the sequence is LVDAQLDYHRQAVQILDELADKLKRRMREASSRPKRE. A disordered region spans residues 243–308; sequence RMREASSRPK…PSRSMPPLDQ (66 aa). A compositionally biased stretch (basic and acidic residues) spans 245–263; the sequence is REASSRPKREYKPKPRELL. 2 positions are modified to phosphoserine: S288 and S292. T298 is modified (phosphothreonine). The SH3 domain maps to 306–365; that stretch reads LDQPSCKALYDFEPENDGELGFHEGDIITLTNQIDENWYEGMLDGQSGFFPLSYVEVLVP. Y315 bears the Phosphotyrosine mark.

Belongs to the endophilin family. In terms of assembly, interacts with ARC, SYNJ1 and DNM1. Interacts with PDCD6IP. Interacts with BIN2.

It is found in the cytoplasm. It localises to the early endosome membrane. Its subcellular location is the cell projection. The protein localises to the podosome. Implicated in endocytosis. May recruit other proteins to membranes with high curvature. The sequence is that of Endophilin-A2 from Bos taurus (Bovine).